We begin with the raw amino-acid sequence, 226 residues long: Acyl-protein thioesterase 1 homolog 1 (226 aa).

Active-site charge relay system residues include Ser-121, Asp-174, and His-206.

The protein belongs to the AB hydrolase superfamily. AB hydrolase 2 family.

Its subcellular location is the cytoplasm. It localises to the nucleus. The enzyme catalyses S-hexadecanoyl-L-cysteinyl-[protein] + H2O = L-cysteinyl-[protein] + hexadecanoate + H(+). Its function is as follows. Hydrolyzes fatty acids from S-acylated cysteine residues in proteins with a strong preference for palmitoylated G-alpha proteins over other acyl substrates. Mediates the deacylation of G-alpha proteins such as GPA1 in vivo, but has weak or no activity toward palmitoylated Ras proteins. Has weak lysophospholipase activity in vitro; however such activity may not exist in vivo. This chain is Acyl-protein thioesterase 1 homolog 1, found in Dictyostelium discoideum (Social amoeba).